A 344-amino-acid polypeptide reads, in one-letter code: Gibberellin receptor GID1C (344 aa).

Alanine 2 carries the post-translational modification N-acetylalanine. The short motif at 111–113 is the Involved in the stabilization of the negatively charged intermediate by the formation of the oxyanion hole element; sequence HGG. Gibberellin A4-binding positions include 113-114, tyrosine 125, and serine 189; that span reads GS. Residues serine 114, tyrosine 125, serine 189, and phenylalanine 236 each coordinate gibberellin A3. Residue serine 189 is part of the active site. Aspartate 287 is an active-site residue. Position 318 (glycine 318) interacts with gibberellin A4. Glycine 318 lines the gibberellin A3 pocket.

It belongs to the 'GDXG' lipolytic enzyme family. As to quaternary structure, interacts with the DELLA proteins GAI, RGA, RGL1, RGL2 and RGL3 in a GA-dependent manner. In terms of tissue distribution, widely expressed.

The protein localises to the nucleus. Functionally, functions as a soluble gibberellin (GA) receptor. GA is an essential hormone that regulates growth and development in plants. Binds with high affinity the biologically active gibberellin GA4, but has no affinity for the biologically inactive GAs. In response to GA, interacts with specific DELLA proteins, known as repressors of GA-induced growth, and targets them for degradation via proteasome. Seems to be required for GA signaling that controls root growth, seed germination and stem elongation. Partially redundant with GID1A and GID1B. The chain is Gibberellin receptor GID1C (GID1C) from Arabidopsis thaliana (Mouse-ear cress).